The primary structure comprises 435 residues: Probable exopolygalacturonase B (435 aa).

The first 15 residues, 1–15, serve as a signal peptide directing secretion; sequence MKFFLATLFASAVSS. Residues Asn-59, Asn-184, and Asn-224 are each glycosylated (N-linked (GlcNAc...) asparagine). 5 PbH1 repeats span residues 208-239, 240-261, 262-283, 294-315, and 326-347; these read SKDV…DSLN, VDGL…SPKP, NTTN…SMGS, IEHA…RLKA, and INNI…VLDQ. Asp-254 serves as the catalytic Proton donor. A disulfide bridge links Cys-256 with Cys-273. 2 N-linked (GlcNAc...) asparagine glycosylation sites follow: Asn-262 and Asn-274. His-277 is an active-site residue. N-linked (GlcNAc...) asparagine glycans are attached at residues Asn-301, Asn-328, Asn-365, and Asn-373. The PbH1 6 repeat unit spans residues 366 to 388; sequence VTNILFENISGTSSGKNGKVVAD. Cys-391 and Cys-397 are joined by a disulfide. N-linked (GlcNAc...) asparagine glycosylation occurs at Asn-406.

It belongs to the glycosyl hydrolase 28 family.

It is found in the secreted. The enzyme catalyses [(1-&gt;4)-alpha-D-galacturonosyl](n) + H2O = alpha-D-galacturonate + [(1-&gt;4)-alpha-D-galacturonosyl](n-1). Specific in hydrolyzing the terminal glycosidic bond of polygalacturonic acid and oligogalacturonates. The polypeptide is Probable exopolygalacturonase B (pgxB) (Aspergillus flavus (strain ATCC 200026 / FGSC A1120 / IAM 13836 / NRRL 3357 / JCM 12722 / SRRC 167)).